Consider the following 842-residue polypeptide: Translation initiation factor IF-2 (842 aa).

The disordered stretch occupies residues 94–259; that stretch reads QRSPEEIQAE…HGFQNPTGPV (166 aa). Residues 96-138 are compositionally biased toward basic and acidic residues; sequence SPEEIQAEQKRELDERRAAENAARDKVEAEVRQRNEEQARRQA. Residues 139–148 are compositionally biased toward low complexity; sequence ADSAVAAPAP. The segment covering 149–159 has biased composition (pro residues); it reads AAKPEPAPAAA. The span at 160 to 172 shows a compositional bias: low complexity; the sequence is PAPVVADAPASED. Composition is skewed to basic and acidic residues over residues 173–202 and 226–235; these read AAAR…RGEA and TTDEESDGAR. Residues 236–249 are compositionally biased toward basic residues; that stretch reads RGRGGKGKLKKRNQ. The tr-type G domain occupies 342 to 509; it reads SRAPVVTVMG…AVLLQAEILE (168 aa). The G1 stretch occupies residues 351–358; the sequence is GHVDHGKT. 351-358 provides a ligand contact to GTP; it reads GHVDHGKT. The segment at 376 to 380 is G2; the sequence is GITQH. The segment at 397–400 is G3; the sequence is DTPG. GTP is bound by residues 397–401 and 451–454; these read DTPGH and NKID. Residues 451 to 454 form a G4 region; the sequence is NKID. The tract at residues 487-489 is G5; it reads SAK.

It belongs to the TRAFAC class translation factor GTPase superfamily. Classic translation factor GTPase family. IF-2 subfamily.

The protein resides in the cytoplasm. In terms of biological role, one of the essential components for the initiation of protein synthesis. Protects formylmethionyl-tRNA from spontaneous hydrolysis and promotes its binding to the 30S ribosomal subunits. Also involved in the hydrolysis of GTP during the formation of the 70S ribosomal complex. The sequence is that of Translation initiation factor IF-2 from Pseudomonas putida (strain GB-1).